Here is a 594-residue protein sequence, read N- to C-terminus: Invasin CotH2 (594 aa).

A signal peptide spans 1–19 (MKLSLTIVSSSFLVAIAHA). Residues Asn-77, Asn-162, Asn-226, Asn-316, Asn-441, Asn-519, and Asn-533 are each glycosylated (N-linked (GlcNAc...) asparagine). The segment at 529–565 (PPAANGTATSTNDGGNTHTAAGESKPASSSESSGSKI) is disordered. Residues 534 to 547 (GTATSTNDGGNTHT) are compositionally biased toward polar residues. The span at 548 to 565 (AAGESKPASSSESSGSKI) shows a compositional bias: low complexity. Ser-571 carries GPI-anchor amidated serine lipidation. Positions 572–594 (GASRSAVSTVLLGVTALVATAIF) are cleaved as a propeptide — removed in mature form.

As to quaternary structure, interacts with host epithelial cell surface HSPA5/BiP protein.

Its subcellular location is the cell membrane. Its function is as follows. Promotes invasion of host epithelial cells by adhering to receptors on the host cell surface to facilitate endocytosis of the pathogen into host cells. Binds HSPA5/BiP protein on the cell surface of host epithelial cells. The polypeptide is Invasin CotH2 (Rhizopus delemar (strain RA 99-880 / ATCC MYA-4621 / FGSC 9543 / NRRL 43880) (Mucormycosis agent)).